The following is a 210-amino-acid chain: Prolactin (210 aa).

The first 23 residues, 1 to 23 (MAEGSRLYFAVTVLMCAFVSING), serve as a signal peptide directing secretion. 2 cysteine pairs are disulfide-bonded: Cys-69–Cys-183 and Cys-200–Cys-210.

This sequence belongs to the somatotropin/prolactin family. As to expression, pituitary gland.

The protein localises to the secreted. The chain is Prolactin (prl) from Hypophthalmichthys nobilis (Bighead carp).